The following is a 94-amino-acid chain: MARLSEAEITEHLAQRPDWSLENNNEIVRTFRLANFPAAIAFVTHVAFLAEAAGHHPDIDIRYNRVRIALTTHDAGGLTEKDFALAAAIDEILG.

The protein belongs to the pterin-4-alpha-carbinolamine dehydratase family.

The catalysed reaction is (4aS,6R)-4a-hydroxy-L-erythro-5,6,7,8-tetrahydrobiopterin = (6R)-L-erythro-6,7-dihydrobiopterin + H2O. This Chloroflexus aggregans (strain MD-66 / DSM 9485) protein is Putative pterin-4-alpha-carbinolamine dehydratase.